Consider the following 308-residue polypeptide: N-acetylmuramic acid 6-phosphate etherase (308 aa).

The SIS domain maps to 62-225; it reads ITDAFKVGGR…TTASMIRLGK (164 aa). The active-site Proton donor is glutamate 90. Glutamate 121 is a catalytic residue.

Belongs to the GCKR-like family. MurNAc-6-P etherase subfamily. Homodimer.

It catalyses the reaction N-acetyl-D-muramate 6-phosphate + H2O = N-acetyl-D-glucosamine 6-phosphate + (R)-lactate. It functions in the pathway amino-sugar metabolism; 1,6-anhydro-N-acetylmuramate degradation. The protein operates within amino-sugar metabolism; N-acetylmuramate degradation. Its pathway is cell wall biogenesis; peptidoglycan recycling. Its function is as follows. Specifically catalyzes the cleavage of the D-lactyl ether substituent of MurNAc 6-phosphate, producing GlcNAc 6-phosphate and D-lactate. Together with AnmK, is also required for the utilization of anhydro-N-acetylmuramic acid (anhMurNAc) either imported from the medium or derived from its own cell wall murein, and thus plays a role in cell wall recycling. The sequence is that of N-acetylmuramic acid 6-phosphate etherase from Vibrio campbellii (strain ATCC BAA-1116).